Consider the following 420-residue polypeptide: PHO85 cyclin-6 (420 aa).

3 disordered regions span residues 1–82, 134–155, and 268–321; these read MSIK…ESSF, QGTHTVQSSTQEDKILDGDTSN, and VTTT…GVQR. Over residues 7–22 the composition is skewed to low complexity; it reads SPSSTNASSSPKSTYS. S61 bears the Phosphoserine mark. The segment covering 134–143 has biased composition (polar residues); the sequence is QGTHTVQSST. Residues 277–296 are compositionally biased toward basic and acidic residues; it reads AKHESPSNESSLDKANRGAD. 2 positions are modified to phosphoserine: S281 and S312. Residues 307–316 show a composition bias toward acidic residues; it reads NENDDSDDEN. T317 is modified (phosphothreonine).

It belongs to the cyclin family. PHO80 subfamily. In terms of assembly, forms a cyclin-CDK complex with PHO85. Interacts with the substrate protein YJL084C. Interacts with elongin-C, which stabilizes PCL6. Interacts with the CDK inhibitor (CKI) PHO81.

It localises to the cytoplasm. It is found in the nucleus. Functionally, cyclin partner of the cyclin-dependent kinase (CDK) PHO85. Together with cyclin PCL7, controls glycogen phosphorylase and glycogen synthase activities in response to nutrient availablility. The PCL6-PHO85 cyclin-CDK holoenzyme has GLC8 kinase activity and phosphorylates and inactivates the phosphatase PP1-2 inhibitor GLC8, causing activation of PP1-2, which then dephosphorylates and activates glycogen phosphorylase. PCL6-PHO85 also phosphorylates YJL084C. This is PHO85 cyclin-6 (PCL6) from Saccharomyces cerevisiae (strain ATCC 204508 / S288c) (Baker's yeast).